Reading from the N-terminus, the 216-residue chain is GTP cyclohydrolase-2 (216 aa).

A GTP-binding site is contributed by 50 to 54 (RIHSE). Positions 55, 66, and 68 each coordinate Zn(2+). Residues Gln71, 93-95 (EGR), and Thr115 each bind GTP. Asp127 serves as the catalytic Proton acceptor. Arg129 acts as the Nucleophile in catalysis. GTP-binding residues include Thr150 and Lys155.

It belongs to the GTP cyclohydrolase II family. Zn(2+) serves as cofactor.

It catalyses the reaction GTP + 4 H2O = 2,5-diamino-6-hydroxy-4-(5-phosphoribosylamino)-pyrimidine + formate + 2 phosphate + 3 H(+). It functions in the pathway cofactor biosynthesis; riboflavin biosynthesis; 5-amino-6-(D-ribitylamino)uracil from GTP: step 1/4. In terms of biological role, catalyzes the conversion of GTP to 2,5-diamino-6-ribosylamino-4(3H)-pyrimidinone 5'-phosphate (DARP), formate and pyrophosphate. This is GTP cyclohydrolase-2 from Histophilus somni (strain 129Pt) (Haemophilus somnus).